A 495-amino-acid chain; its full sequence is Transcription termination/antitermination protein NusA (495 aa).

Residues 135–200 (GKIVTGTVKK…KTAQLFVTRS (66 aa)) enclose the S1 motif domain. A KH domain is found at 302–374 (NHSMDIAVEA…LDEEFAQILV (73 aa)).

Belongs to the NusA family. As to quaternary structure, monomer. Binds directly to the core enzyme of the DNA-dependent RNA polymerase and to nascent RNA.

The protein localises to the cytoplasm. Participates in both transcription termination and antitermination. The protein is Transcription termination/antitermination protein NusA of Haemophilus influenzae (strain ATCC 51907 / DSM 11121 / KW20 / Rd).